Here is a 196-residue protein sequence, read N- to C-terminus: Large ribosomal subunit protein bL17 (196 aa).

Residues 133-196 (AAKRDADKKE…KPAAEEKDAK (64 aa)) form a disordered region. The segment covering 134 to 143 (AKRDADKKEA) has biased composition (basic and acidic residues). The segment covering 152–164 (EVAETEAAPEAEA) has biased composition (acidic residues). Over residues 184 to 196 (AAEKPAAEEKDAK) the composition is skewed to basic and acidic residues.

Belongs to the bacterial ribosomal protein bL17 family. Part of the 50S ribosomal subunit. Contacts protein L32.

The polypeptide is Large ribosomal subunit protein bL17 (Arthrobacter sp. (strain FB24)).